The sequence spans 191 residues: DNA-directed RNA polymerase subunit Rpo3 (191 aa).

This sequence belongs to the archaeal Rpo3/eukaryotic RPB3 RNA polymerase subunit family. In terms of assembly, part of the RNA polymerase complex. Interacts with Rpo12. Forms an Rpo3-Rpo10-Rpo11-Rpo12 complex upon coexpression.

Its subcellular location is the cytoplasm. The catalysed reaction is RNA(n) + a ribonucleoside 5'-triphosphate = RNA(n+1) + diphosphate. Functionally, DNA-dependent RNA polymerase (RNAP) catalyzes the transcription of DNA into RNA using the four ribonucleoside triphosphates as substrates. This Methanocaldococcus jannaschii (strain ATCC 43067 / DSM 2661 / JAL-1 / JCM 10045 / NBRC 100440) (Methanococcus jannaschii) protein is DNA-directed RNA polymerase subunit Rpo3.